Reading from the N-terminus, the 357-residue chain is Histidine biosynthesis bifunctional protein HisB (357 aa).

Positions 1-167 are histidinol-phosphatase; that stretch reads MNDKILFIDR…IHKYLMQNSH (167 aa). The Nucleophile role is filled by Asp9. Mg(2+) is bound by residues Asp9 and Asp11. Residue Asp11 is the Proton donor of the active site. Zn(2+) is bound by residues Cys93, His95, Cys101, and Cys103. Residue Asp130 participates in Mg(2+) binding. Residues 168–357 are imidazoleglycerol-phosphate dehydratase; that stretch reads RVAHIQRITN…QIPSSKGILL (190 aa).

This sequence in the N-terminal section; belongs to the histidinol-phosphatase family. It in the C-terminal section; belongs to the imidazoleglycerol-phosphate dehydratase family. Mg(2+) is required as a cofactor. Requires Zn(2+) as cofactor.

The protein localises to the cytoplasm. The enzyme catalyses D-erythro-1-(imidazol-4-yl)glycerol 3-phosphate = 3-(imidazol-4-yl)-2-oxopropyl phosphate + H2O. It catalyses the reaction L-histidinol phosphate + H2O = L-histidinol + phosphate. Its pathway is amino-acid biosynthesis; L-histidine biosynthesis; L-histidine from 5-phospho-alpha-D-ribose 1-diphosphate: step 6/9. The protein operates within amino-acid biosynthesis; L-histidine biosynthesis; L-histidine from 5-phospho-alpha-D-ribose 1-diphosphate: step 8/9. In Blochmanniella floridana, this protein is Histidine biosynthesis bifunctional protein HisB.